A 402-amino-acid chain; its full sequence is Multidrug resistance protein MdtH (402 aa).

11 helical membrane-spanning segments follow: residues 13–33 (YFLL…FPLI), 45–65 (ALMV…LGIF), 99–116 (PWLL…GTLF), 139–159 (LLMM…SWLL), 165–185 (LVCA…AWLL), 214–234 (VLTL…LPIM), 244–264 (AVKW…YPIA), 277–297 (LMAG…VGNL), 300–322 (LFTL…ETLS), 340–360 (LGLA…FDMG), and 368–388 (LPWM…GWQF).

Belongs to the major facilitator superfamily. DHA1 family. MdtH (TC 2.A.1.2.21) subfamily.

It localises to the cell inner membrane. The polypeptide is Multidrug resistance protein MdtH (Citrobacter koseri (strain ATCC BAA-895 / CDC 4225-83 / SGSC4696)).